A 572-amino-acid polypeptide reads, in one-letter code: Protein IQ-DOMAIN 30 (572 aa).

The tract at residues 75–96 is disordered; that stretch reads SDDEIQVSEVQPTDSQDVASVP. Positions 82-92 are enriched in polar residues; it reads SEVQPTDSQDV. IQ domains are found at residues 108-136 and 137-154; these read QEIA…GIIR and LQAL…VSTL. The tract at residues 159–178 is calmodulin-binding; that stretch reads GIVRLQALARGREIRHSDIG. Disordered regions lie at residues 282 to 332 and 399 to 572; these read RPKK…MDNP and IQTH…EWKR. 2 stretches are compositionally biased toward polar residues: residues 291–305 and 400–419; these read PSSN…QTSS and QTHT…VNQI. Residues 428–455 show a composition bias toward basic and acidic residues; sequence AEEKEDVKEERTPKQNHKENSAGKENQK. Polar residues-rich tracts occupy residues 459-493, 502-514, and 522-560; these read KASS…QATK, QGSS…GTTE, and LPSS…SSRE.

This sequence belongs to the IQD family. Binds to multiple calmodulin (CaM) in the presence of Ca(2+) and CaM-like proteins.

The protein localises to the nucleus envelope. Its subcellular location is the cytoplasm. It localises to the cytoskeleton. Functionally, may be involved in cooperative interactions with calmodulins or calmodulin-like proteins. Recruits calmodulin proteins to microtubules, thus being a potential scaffold in cellular signaling and trafficking. May associate with nucleic acids and regulate gene expression at the transcriptional or post-transcriptional level. In Arabidopsis thaliana (Mouse-ear cress), this protein is Protein IQ-DOMAIN 30.